A 340-amino-acid polypeptide reads, in one-letter code: Replication factor C subunit 2 (340 aa).

59-66 lines the ATP pocket; sequence GSPGTGKT.

Belongs to the activator 1 small subunits family. As to quaternary structure, heteropentamer of subunits rfc1, rfc2, rfc3, rfc4 and rfc5 that forms a complex (RFC) with PCNA in the presence of ATP. Two other complexes exist where rfc1 can be replaced by either ctf18 or elg1 to form the ctf18-RFC or the elg1-RFC complexes respectively.

It is found in the nucleus. Its function is as follows. The elongation of primed DNA templates by DNA polymerase delta and epsilon requires the action of the accessory proteins PCNA and activator 1. Subunit 2 binds ATP and single-stranded DNA. The chain is Replication factor C subunit 2 (rfc2) from Schizosaccharomyces pombe (strain 972 / ATCC 24843) (Fission yeast).